The following is a 124-amino-acid chain: MTIDEMMSAIKGMTVIELSELVKALEKEFGVSAAVAVAAPAAGGAAVAAAAEEEKTEFNVILKDVGANKINVIKAVRELTSLGLKEAKDMVEAAPKAVKENVSKEEADAAKKALEAAGATIEIK.

This sequence belongs to the bacterial ribosomal protein bL12 family. As to quaternary structure, homodimer. Part of the ribosomal stalk of the 50S ribosomal subunit. Forms a multimeric L10(L12)X complex, where L10 forms an elongated spine to which 2 to 4 L12 dimers bind in a sequential fashion. Binds GTP-bound translation factors.

Its function is as follows. Forms part of the ribosomal stalk which helps the ribosome interact with GTP-bound translation factors. Is thus essential for accurate translation. The chain is Large ribosomal subunit protein bL12 from Dehalococcoides mccartyi (strain ATCC BAA-2266 / KCTC 15142 / 195) (Dehalococcoides ethenogenes (strain 195)).